The sequence spans 432 residues: Asparagine--tRNA ligase (432 aa).

It belongs to the class-II aminoacyl-tRNA synthetase family. As to quaternary structure, homodimer.

The protein resides in the cytoplasm. It carries out the reaction tRNA(Asn) + L-asparagine + ATP = L-asparaginyl-tRNA(Asn) + AMP + diphosphate + H(+). This Lactobacillus gasseri (strain ATCC 33323 / DSM 20243 / BCRC 14619 / CIP 102991 / JCM 1131 / KCTC 3163 / NCIMB 11718 / NCTC 13722 / AM63) protein is Asparagine--tRNA ligase.